A 140-amino-acid polypeptide reads, in one-letter code: Ribosome-binding factor A (140 aa).

The segment at 1 to 23 is disordered; that stretch reads MLRDRNRSGVRGGAEGPSQRQRR.

This sequence belongs to the RbfA family. In terms of assembly, monomer. Binds 30S ribosomal subunits, but not 50S ribosomal subunits or 70S ribosomes.

The protein localises to the cytoplasm. Its function is as follows. One of several proteins that assist in the late maturation steps of the functional core of the 30S ribosomal subunit. Associates with free 30S ribosomal subunits (but not with 30S subunits that are part of 70S ribosomes or polysomes). Required for efficient processing of 16S rRNA. May interact with the 5'-terminal helix region of 16S rRNA. In Acidiphilium cryptum (strain JF-5), this protein is Ribosome-binding factor A.